Consider the following 441-residue polypeptide: GTPase Der (441 aa).

EngA-type G domains follow at residues 4-168 and 177-352; these read PVVA…PEDI and IRIA…EQNS. Residues 10–17, 57–61, 121–124, 183–190, 230–234, and 295–298 each bind GTP; these read GRPNVGKS, DTGGI, NKVE, DTAGM, and NKWD. One can recognise a KH-like domain in the interval 353–437; the sequence is TRVATATLNT…PIRMIVRQKD (85 aa).

Belongs to the TRAFAC class TrmE-Era-EngA-EngB-Septin-like GTPase superfamily. EngA (Der) GTPase family. In terms of assembly, associates with the 50S ribosomal subunit.

In terms of biological role, GTPase that plays an essential role in the late steps of ribosome biogenesis. The polypeptide is GTPase Der (Desulfitobacterium hafniense (strain Y51)).